A 466-amino-acid chain; its full sequence is 3-isopropylmalate dehydratase large subunit (466 aa).

[4Fe-4S] cluster is bound by residues C347, C407, and C410.

This sequence belongs to the aconitase/IPM isomerase family. LeuC type 1 subfamily. Heterodimer of LeuC and LeuD. [4Fe-4S] cluster is required as a cofactor.

It carries out the reaction (2R,3S)-3-isopropylmalate = (2S)-2-isopropylmalate. It functions in the pathway amino-acid biosynthesis; L-leucine biosynthesis; L-leucine from 3-methyl-2-oxobutanoate: step 2/4. Functionally, catalyzes the isomerization between 2-isopropylmalate and 3-isopropylmalate, via the formation of 2-isopropylmaleate. In Klebsiella pneumoniae (strain 342), this protein is 3-isopropylmalate dehydratase large subunit.